The following is a 126-amino-acid chain: UPF0102 protein MXAN_3551 (126 aa).

The protein belongs to the UPF0102 family.

The sequence is that of UPF0102 protein MXAN_3551 from Myxococcus xanthus (strain DK1622).